The primary structure comprises 158 residues: Small ribosomal subunit protein uS7 (158 aa).

Belongs to the universal ribosomal protein uS7 family. As to quaternary structure, part of the 30S ribosomal subunit. Contacts proteins S9 and S11.

In terms of biological role, one of the primary rRNA binding proteins, it binds directly to 16S rRNA where it nucleates assembly of the head domain of the 30S subunit. Is located at the subunit interface close to the decoding center, probably blocks exit of the E-site tRNA. The sequence is that of Small ribosomal subunit protein uS7 from Granulibacter bethesdensis (strain ATCC BAA-1260 / CGDNIH1).